The following is a 341-amino-acid chain: UDP-3-O-acylglucosamine N-acyltransferase (341 aa).

Histidine 240 functions as the Proton acceptor in the catalytic mechanism.

It belongs to the transferase hexapeptide repeat family. LpxD subfamily. Homotrimer.

The enzyme catalyses a UDP-3-O-[(3R)-3-hydroxyacyl]-alpha-D-glucosamine + a (3R)-hydroxyacyl-[ACP] = a UDP-2-N,3-O-bis[(3R)-3-hydroxyacyl]-alpha-D-glucosamine + holo-[ACP] + H(+). It participates in bacterial outer membrane biogenesis; LPS lipid A biosynthesis. In terms of biological role, catalyzes the N-acylation of UDP-3-O-acylglucosamine using 3-hydroxyacyl-ACP as the acyl donor. Is involved in the biosynthesis of lipid A, a phosphorylated glycolipid that anchors the lipopolysaccharide to the outer membrane of the cell. This chain is UDP-3-O-acylglucosamine N-acyltransferase, found in Cellvibrio japonicus (strain Ueda107) (Pseudomonas fluorescens subsp. cellulosa).